Reading from the N-terminus, the 329-residue chain is Diaminopimelate epimerase (329 aa).

Residues Asn14 and Asn73 each contribute to the substrate site. Catalysis depends on Cys82, which acts as the Proton donor. Substrate is bound by residues 83 to 84 (GN), Asn170, Asn206, and 224 to 225 (ER). Residue Cys233 is the Proton acceptor of the active site. Position 234–235 (234–235 (GT)) interacts with substrate.

This sequence belongs to the diaminopimelate epimerase family. Homodimer.

The protein localises to the cytoplasm. The catalysed reaction is (2S,6S)-2,6-diaminopimelate = meso-2,6-diaminopimelate. It functions in the pathway amino-acid biosynthesis; L-lysine biosynthesis via DAP pathway; DL-2,6-diaminopimelate from LL-2,6-diaminopimelate: step 1/1. In terms of biological role, catalyzes the stereoinversion of LL-2,6-diaminopimelate (L,L-DAP) to meso-diaminopimelate (meso-DAP), a precursor of L-lysine and an essential component of the bacterial peptidoglycan. This chain is Diaminopimelate epimerase, found in Listeria monocytogenes serotype 4b (strain F2365).